The primary structure comprises 598 residues: MSPGNWKTTMVVRGILLILYGLLLQPEPGTATLPLLMDSVIQALAELERKSPATEAGHIASMWLLSAQGSGAHNPLPRFLLEGQSLKTAKLAPPSLSPEFQGLIEEVARHGVQDGKEYGVVLAPDGSTVAVEPLLAGLEAGLQGHRVVNLPLDSTATFPDIGATVPDLKATSSAHKDTSADVNSADVGTLSPNVRDTDVDAEVTFLDVRPSSTGVQVTSPDVQVSSPDTKAKSPTTVDSLLMVTLARDLGLHFLQGAQTESNSGLGTEGCWDQLSLPRTFTLLDPEASPLTMAFLNGALDGALLGDYLSKVPEPRPPLSHLLNQYYGAGVAGDPGLRSNFRRQNGAALTLTPNLTQQVWGTLILLQRLEPAHPQLQGMSQEQLAQVATHAAKEFTEAFLGCPAIHPRCRWGAAPYRGSPKPLKLPLGFLYIHHTYVPARPCTDFALCAANMRSMQRFHLDTQGWDDIGYSFVVGSDGYVYEGRGWHWVGAHTRDHNSRGFGVALIGNYTAELPSEAALRAVRDELPHCAVRAGLLQPDYALLGHRQLVRTDCPGDALFNMLRTWPRFNMNVKPRTARRASGRSKRRLPLMIPLATDLQ.

The signal sequence occupies residues 1-31 (MSPGNWKTTMVVRGILLILYGLLLQPEPGTA). 2 disordered regions span residues 172-194 (SSAH…SPNV) and 212-233 (STGV…KAKS). Ser261 is modified (phosphoserine). N-linked (GlcNAc...) asparagine glycosylation occurs at Asn353. The N-acetylmuramoyl-L-alanine amidase domain occupies 428-554 (FLYIHHTYVP…RQLVRTDCPG (127 aa)). Residue His432 participates in Zn(2+) binding. Cys441 and Cys447 are joined by a disulfide. Asn507 carries N-linked (GlcNAc...) asparagine glycosylation. Zn(2+) is bound by residues His544 and Cys552.

This sequence belongs to the N-acetylmuramoyl-L-alanine amidase 2 family. Requires Zn(2+) as cofactor.

The protein localises to the secreted. Its subcellular location is the membrane. It carries out the reaction Hydrolyzes the link between N-acetylmuramoyl residues and L-amino acid residues in certain cell-wall glycopeptides.. Its function is as follows. May play a scavenger role by digesting biologically active peptidoglycan (PGN) into biologically inactive fragments. Has no direct bacteriolytic activity. This is N-acetylmuramoyl-L-alanine amidase (PGLYRP2) from Sus scrofa (Pig).